The chain runs to 460 residues: Arginine biosynthesis bifunctional protein ArgJ, chloroplastic (460 aa).

Residues 1–26 (MYLSVPHYPSLKFTAFQSHKRNFRVF) constitute a chloroplast transit peptide. Substrate is bound by residues Thr-202, Lys-228, Thr-239, Glu-328, Asn-455, and Thr-460. Thr-239 serves as the catalytic Nucleophile.

Belongs to the ArgJ family. Heterodimer of an alpha and a beta chain.

The protein localises to the plastid. The protein resides in the chloroplast. The catalysed reaction is N(2)-acetyl-L-ornithine + L-glutamate = N-acetyl-L-glutamate + L-ornithine. It catalyses the reaction L-glutamate + acetyl-CoA = N-acetyl-L-glutamate + CoA + H(+). It participates in amino-acid biosynthesis; L-arginine biosynthesis; L-ornithine and N-acetyl-L-glutamate from L-glutamate and N(2)-acetyl-L-ornithine (cyclic): step 1/1. It functions in the pathway amino-acid biosynthesis; L-arginine biosynthesis; N(2)-acetyl-L-ornithine from L-glutamate: step 1/4. Catalyzes two activities which are involved in the cyclic version of arginine biosynthesis: the synthesis of acetylglutamate from glutamate and acetyl-CoA, and of ornithine by transacetylation between acetylornithine and glutamate. In Citrullus lanatus (Watermelon), this protein is Arginine biosynthesis bifunctional protein ArgJ, chloroplastic.